The following is a 227-amino-acid chain: ATP-dependent dethiobiotin synthetase BioD (227 aa).

13–18 (DIGKTY) serves as a coordination point for ATP. Thr17 lines the Mg(2+) pocket. The active site involves Lys38. A substrate-binding site is contributed by Ser42. ATP contacts are provided by residues Asp55, 116 to 119 (EGSG), and 179 to 180 (NN). The Mg(2+) site is built by Asp55 and Glu116.

This sequence belongs to the dethiobiotin synthetase family. In terms of assembly, homodimer. Mg(2+) is required as a cofactor.

It localises to the cytoplasm. It carries out the reaction (7R,8S)-7,8-diammoniononanoate + CO2 + ATP = (4R,5S)-dethiobiotin + ADP + phosphate + 3 H(+). It functions in the pathway cofactor biosynthesis; biotin biosynthesis; biotin from 7,8-diaminononanoate: step 1/2. Its function is as follows. Catalyzes a mechanistically unusual reaction, the ATP-dependent insertion of CO2 between the N7 and N8 nitrogen atoms of 7,8-diaminopelargonic acid (DAPA, also called 7,8-diammoniononanoate) to form a ureido ring. This Clostridium botulinum (strain Okra / Type B1) protein is ATP-dependent dethiobiotin synthetase BioD.